The following is a 131-amino-acid chain: Beta/delta-urticatoxin-Dm2a (131 aa).

The signal sequence occupies residues 1 to 24 (MKSSATVVLLVAAVTAAMVMSSSA). Residues 25-69 (SGDAVMIDEHNNIMTSVEGKRGIGSSVVANGGNRKMANVLLSGWE) constitute a propeptide that is removed on maturation. 6 disulfide bridges follow: Cys72–Cys88, Cys79–Cys93, Cys87–Cys101, Cys103–Cys117, Cys110–Cys122, and Cys116–Cys130.

This sequence belongs to the urticatoxin-2 family. As to expression, expressed in trichomes, that are stiff epidermal hairs located on the surface of petioles and leaves.

Its subcellular location is the secreted. In terms of biological role, plant defense neurotoxin that causes pain and systemic symptoms in mammals via modulation of voltage-gated sodium channels (Nav). Potent modulator of human Nav1.5/SCN5A (EC(50)=55 nM), Nav1.6/SCN8A (EC(50)=0.86 nM), and Nav1.7/SCN9A (EC(50)=208 nM), where it shifts the activation threshold to more negative potentials and delays fast inactivation. Also shifts the voltage-dependence of steady-state fast inactivation of Nav1.6/SCN8A, but not that of Nav1.5/SCN5A or Nav1.7/SCN9A. On Nav1.7/SCN9A, principally acts by binding to extracellular loops of domain IV (Nav site 3). In vivo, intraplantar injection into mice causes numerous dose-dependent, immediate, and long-lasting spontaneous pain behaviors, while no swelling is observed in the injected paw. At the highest doses tested, systemic symptoms including hypokinesia and hypersalivation are observed. In Dendrocnide moroides (Gympie stinging tree), this protein is Beta/delta-urticatoxin-Dm2a.